The following is a 78-amino-acid chain: Conotoxin TsMSGL-13 (78 aa).

Positions 1-24 (MSGLGIMVLTLLLFMFMATSHQDA) are cleaved as a signal peptide. The propeptide occupies 25 to 44 (GEKQATQRDAINVRRRRSIT). 3 cysteine pairs are disulfide-bonded: C51-C63, C55-C72, and C62-C76. Phenylalanine amide is present on F77.

The protein belongs to the conotoxin O3 superfamily. In terms of tissue distribution, expressed by the venom duct.

It localises to the secreted. This is Conotoxin TsMSGL-13 from Conus tessulatus (Tessellate cone).